Consider the following 310-residue polypeptide: Malate dehydrogenase (310 aa).

NAD(+)-binding positions include 7 to 13 and aspartate 34; that span reads GAAGGIG. Residues arginine 81 and arginine 87 each contribute to the substrate site. NAD(+)-binding positions include asparagine 94 and 117–119; that span reads ITN. Substrate-binding residues include asparagine 119 and arginine 153. The active-site Proton acceptor is histidine 177. Methionine 227 lines the NAD(+) pocket.

It belongs to the LDH/MDH superfamily. MDH type 1 family. Homodimer.

It catalyses the reaction (S)-malate + NAD(+) = oxaloacetate + NADH + H(+). Its function is as follows. Catalyzes the reversible oxidation of malate to oxaloacetate. The sequence is that of Malate dehydrogenase from Vibrio vulnificus (strain CMCP6).